The chain runs to 71 residues: Disintegrin ussuristatin-2 (71 aa).

The region spanning 1 to 71 (EAGEECDCGA…QSADCPRNGF (71 aa)) is the Disintegrin domain. 6 disulfides stabilise this stretch: C6-C21, C8-C16, C15-C38, C29-C35, C34-C59, and C47-C66. The short motif at 51–53 (KGD) is the Cell attachment site; atypical (KGD) element.

The protein belongs to the venom metalloproteinase (M12B) family. P-II subfamily. P-IId sub-subfamily. Homodimer. As to expression, expressed by the venom gland.

The protein localises to the secreted. Functionally, suppress platelet aggregation induced by ADP, collagen, thrombin, and epinephrine (IC(50)=170-330 nM). Also dose-dependently inhibits the adhesion of human melanoma cells to fibrinogen but not to fibronectin. The polypeptide is Disintegrin ussuristatin-2 (Gloydius ussuriensis (Ussuri mamushi)).